Reading from the N-terminus, the 147-residue chain is Protein AfaD (147 aa).

The first 26 residues, 1–26 (MNGSIRKMMRVTCGMLLMVMSGVSQA), serve as a signal peptide directing secretion. Positions 91–111 (RTGGDGWSPVKGEGGKGVSRP) are disordered.

To E.coli AggB.

This chain is Protein AfaD (afaD), found in Escherichia coli.